Here is a 179-residue protein sequence, read N- to C-terminus: Large ribosomal subunit protein uL5 (179 aa).

This sequence belongs to the universal ribosomal protein uL5 family. In terms of assembly, part of the 50S ribosomal subunit; part of the 5S rRNA/L5/L18/L25 subcomplex. Contacts the 5S rRNA and the P site tRNA. Forms a bridge to the 30S subunit in the 70S ribosome.

Functionally, this is one of the proteins that bind and probably mediate the attachment of the 5S RNA into the large ribosomal subunit, where it forms part of the central protuberance. In the 70S ribosome it contacts protein S13 of the 30S subunit (bridge B1b), connecting the 2 subunits; this bridge is implicated in subunit movement. Contacts the P site tRNA; the 5S rRNA and some of its associated proteins might help stabilize positioning of ribosome-bound tRNAs. The protein is Large ribosomal subunit protein uL5 of Halalkalibacterium halodurans (strain ATCC BAA-125 / DSM 18197 / FERM 7344 / JCM 9153 / C-125) (Bacillus halodurans).